Consider the following 497-residue polypeptide: C4-dicarboxylate transport protein (497 aa).

8 helical membrane passes run 27 to 45 (LYVQ…GYFY), 60 to 82 (IMLV…IAGM), 95 to 117 (AMIY…ANVV), 168 to 185 (ILQV…LAIV), 205 to 227 (RLVA…FTIG), 237 to 259 (LAML…LGAV), 348 to 370 (ILLL…AGFI), and 374 to 393 (ATLS…ILGI). Residues 466-497 (ADRTLAGRPGGRDSRRIAPDHSAQVFGGPLSL) form a disordered region. Over residues 475–484 (GGRDSRRIAP) the composition is skewed to basic and acidic residues.

The protein belongs to the dicarboxylate/amino acid:cation symporter (DAACS) (TC 2.A.23) family.

The protein localises to the cell inner membrane. In terms of biological role, responsible for the transport of dicarboxylates such as succinate, fumarate, and malate from the periplasm across the inner membrane. This transport system plays an essential role in the energy supply of tropical rhizobium-legume symbionts. The chain is C4-dicarboxylate transport protein (dctA1) from Sinorhizobium fredii (strain NBRC 101917 / NGR234).